The chain runs to 125 residues: Small ribosomal subunit protein eS8 (125 aa).

It belongs to the eukaryotic ribosomal protein eS8 family. Part of the 30S ribosomal subunit.

The polypeptide is Small ribosomal subunit protein eS8 (Methanosarcina mazei (strain ATCC BAA-159 / DSM 3647 / Goe1 / Go1 / JCM 11833 / OCM 88) (Methanosarcina frisia)).